Consider the following 42-residue polypeptide: MKVMGSLKSAKSRDRDCKIVRRKGRVYVINKKKPRFKARQGY.

The protein belongs to the bacterial ribosomal protein bL36 family.

The polypeptide is Large ribosomal subunit protein bL36 (Anaplasma phagocytophilum (strain HZ)).